A 173-amino-acid chain; its full sequence is Aliphatic sulfonate oxidoreductase, polyferredoxin-like subunit (173 aa).

4Fe-4S ferredoxin-type domains lie at 9–40 (IWILITPDKCSGCRLCEVTCSLEHEGIIWPEA), 48–80 (LFPGINVPHTCVQCPDYPCVNACPTNALSVDEK), and 82–111 (GAVVVNEEKCITCGACVLACPGKVPRIPAG). Positions 18, 21, 24, 28, 58, 61, 66, 70, 91, 94, 97, 101, 118, 121, 127, and 131 each coordinate [4Fe-4S] cluster.

As to quaternary structure, heterodimer composed of a small WOR5-S subunit, with four [4Fe-4S] clusters, and a large WOR5-L subunit, containing the active site tungsto-bispyranopterin cofactor as well as another [4Fe-4S] cluster. [4Fe-4S] cluster is required as a cofactor.

The protein resides in the cytoplasm. Polyferredoxin-like subunit of an oxidoreductase that can desulfonate and oxidize aliphatic sulfonates such as taurine. May serve as a an electron-transfer subunit between the catalytic subunit and ferredoxin. This is Aliphatic sulfonate oxidoreductase, polyferredoxin-like subunit from Pyrococcus furiosus (strain ATCC 43587 / DSM 3638 / JCM 8422 / Vc1).